Consider the following 150-residue polypeptide: CCAAT/enhancer-binding protein gamma (150 aa).

Lys3 participates in a covalent cross-link: Glycyl lysine isopeptide (Lys-Gly) (interchain with G-Cter in SUMO2). Residues Gly27–Val94 are disordered. Residues Leu28–Ala37 are compositionally biased toward low complexity. The segment covering Ser56–Asn72 has biased composition (basic and acidic residues). Positions Ser62–His125 constitute a bZIP domain. Residues Arg66–Arg93 are basic motif. Residues Leu97 to Leu118 are leucine-zipper.

It belongs to the bZIP family. C/EBP subfamily. In terms of assembly, binds DNA as a dimer and can form stable heterodimers with CEBPA and CEBPB. Interacts with ZNF638; this interaction increases transcriptional activation.

It is found in the nucleus. Its function is as follows. Transcription factor that binds to the promoter and the enhancer regions of target genes. Binds to the enhancer element PRE-I (positive regulatory element-I) of the IL-4 gene. Binds to the promoter and the enhancer of the immunoglobulin heavy chain. Binds to GPE1, a cis-acting element in the G-CSF gene promoter. In Homo sapiens (Human), this protein is CCAAT/enhancer-binding protein gamma (CEBPG).